The primary structure comprises 524 residues: Bifunctional methyltransferase (524 aa).

A hemK region spans residues 1 to 306 (MQCSIKQILS…GHSRVILFSP (306 aa)). Residues 1–308 (MQCSIKQILS…SRVILFSPIN (308 aa)) form an RF MTase region. S-adenosyl-L-methionine-binding positions include 146-150 (GTGSG), Asp169, Trp198, Asn213, Glu353, Glu378, Asn405, and Asp427. 213 to 216 (NPPY) serves as a coordination point for substrate. The segment at 307–524 (INLNRSYARR…MILRHVLGDH (218 aa)) is tRNA (guanine-N(7)-)-methyltransferase. The tRNA MTase stretch occupies residues 311–524 (RSYARRIGKS…MILRHVLGDH (214 aa)). Asp427 is a catalytic residue. Substrate is bound by residues Lys431 and Asp463.

The protein in the C-terminal section; belongs to the class I-like SAM-binding methyltransferase superfamily. TrmB family. It in the N-terminal section; belongs to the protein N5-glutamine methyltransferase family. PrmC subfamily.

It catalyses the reaction L-glutaminyl-[peptide chain release factor] + S-adenosyl-L-methionine = N(5)-methyl-L-glutaminyl-[peptide chain release factor] + S-adenosyl-L-homocysteine + H(+). It carries out the reaction guanosine(46) in tRNA + S-adenosyl-L-methionine = N(7)-methylguanosine(46) in tRNA + S-adenosyl-L-homocysteine. In terms of biological role, methylates the class 1 translation termination release factors RF1/PrfA and RF2/PrfB on the glutamine residue of the universally conserved GGQ motif. Catalyzes the formation of N(7)-methylguanine at position 46 (m7G46) in tRNA. The chain is Bifunctional methyltransferase (prmC/trmB) from Rickettsia conorii (strain ATCC VR-613 / Malish 7).